A 471-amino-acid chain; its full sequence is MSHQSDLIETDIDAYLAQHEQKELLRFLTCGSVDDGKSTLIGRLLHDSKMIYEDQLEAVRNDNSKHGTTGDKVDLALLVDGLQAEREQGITIDVAYRYFSTAKRKFIIADTPGHEQYTRNMATGASTCDMAIILIDARHGVMTQTRRHSFIASLLGIKHLVIAINKMDLVDYSQETFESIKQAYGEVAKTLGQENLYFVPMSALDGDNVVNKSENMPWYTGESLMEILESVQITGAKNLKDFRYPVQYVNRPHLNFRGFCGTVASGEVKVGDEIRVLPSGKTSKVKEIVTYDGNLDKAFIDQAVTITLEDEIDISRGDMLVHAASDVQMSNRFKAHLVWMSETNMAPGKEYLFKFATKVTPGSVAAIDYRVDVNTFEHSSIEKMELNDIAVVELALDQQVVAESYQVNRGTGAFIVIDRLTNITVAAGMVIDVLEESSEAKSDFSAFEVELNALVRKHFPHWDAKDISKLL.

The 216-residue stretch at K22–K237 folds into the tr-type G domain. The tract at residues G31–S38 is G1. G31–S38 provides a ligand contact to GTP. Residues G89 to D93 form a G2 region. The tract at residues D110–G113 is G3. Residues D110–H114 and N165–D168 contribute to the GTP site. The tract at residues N165–D168 is G4. The segment at S202 to L204 is G5.

Belongs to the TRAFAC class translation factor GTPase superfamily. Classic translation factor GTPase family. CysN/NodQ subfamily. In terms of assembly, heterodimer composed of CysD, the smaller subunit, and CysN.

The enzyme catalyses sulfate + ATP + H(+) = adenosine 5'-phosphosulfate + diphosphate. It functions in the pathway sulfur metabolism; hydrogen sulfide biosynthesis; sulfite from sulfate: step 1/3. Functionally, with CysD forms the ATP sulfurylase (ATPS) that catalyzes the adenylation of sulfate producing adenosine 5'-phosphosulfate (APS) and diphosphate, the first enzymatic step in sulfur assimilation pathway. APS synthesis involves the formation of a high-energy phosphoric-sulfuric acid anhydride bond driven by GTP hydrolysis by CysN coupled to ATP hydrolysis by CysD. The protein is Sulfate adenylyltransferase subunit 1 of Saccharophagus degradans (strain 2-40 / ATCC 43961 / DSM 17024).